The primary structure comprises 819 residues: DNA topoisomerase 4 subunit A (819 aa).

Residues Leu30–Leu496 form the Topo IIA-type catalytic domain. Tyr118 acts as the O-(5'-phospho-DNA)-tyrosine intermediate in catalysis.

Belongs to the type II topoisomerase GyrA/ParC subunit family. ParC type 2 subfamily. As to quaternary structure, heterotetramer composed of ParC and ParE.

The protein localises to the cell membrane. It carries out the reaction ATP-dependent breakage, passage and rejoining of double-stranded DNA.. Its function is as follows. Topoisomerase IV is essential for chromosome segregation. It relaxes supercoiled DNA. Performs the decatenation events required during the replication of a circular DNA molecule. This is DNA topoisomerase 4 subunit A from Streptococcus pyogenes serotype M3 (strain SSI-1).